The following is a 784-amino-acid chain: ATP-dependent 6-phosphofructokinase, platelet type (784 aa).

M1 is modified (N-acetylmethionine). Residues 1-399 (MDADDSRAPK…NLNTYKRLAI (399 aa)) are N-terminal catalytic PFK domain 1. A phosphoserine mark is found at S6, S12, and S21. Residues G34, 97-98 (RC), and 127-130 (GDGS) contribute to the ATP site. A Mg(2+)-binding site is contributed by D128. The residue at position 142 (S142) is a Phosphoserine. Substrate-binding positions include 173–175 (SID), R210, 217–219 (MGR), E273, R301, and 307–310 (HVQR). Catalysis depends on D175, which acts as the Proton acceptor. At S386 the chain carries Phosphoserine. K395 carries the post-translational modification N6-acetyllysine. The interval 400–411 (KLPDDQIPKTNC) is interdomain linker. The C-terminal regulatory PFK domain 2 stretch occupies residues 412–784 (NVAVINVGAP…QLEHVQPWSV (373 aa)). Position 481 (R481) interacts with beta-D-fructose 2,6-bisphosphate. K486 bears the N6-acetyllysine mark. Beta-D-fructose 2,6-bisphosphate-binding positions include 538-542 (TVSNN), R576, 583-585 (MGG), and E639. S540 is a glycosylation site (O-linked (GlcNAc) serine). A Phosphotyrosine modification is found at Y651. Beta-D-fructose 2,6-bisphosphate-binding positions include R665 and 671-674 (HMQQ). The residue at position 688 (K688) is an N6-acetyllysine. R744 is a beta-D-fructose 2,6-bisphosphate binding site. S783 is subject to Phosphoserine.

It belongs to the phosphofructokinase type A (PFKA) family. ATP-dependent PFK group I subfamily. Eukaryotic two domain clade 'E' sub-subfamily. In terms of assembly, homo- and heterotetramers. Phosphofructokinase (PFK) enzyme functions as a tetramer composed of different combinations of 3 types of subunits, called PFKM (where M stands for Muscle), PFKL (Liver) and PFKP (Platelet). The composition of the PFK tetramer differs according to the tissue type it is present in. In muscles, it is composed of 4 PFKM subunits (also called M4). In the liver, the predominant form is a tetramer of PFKL subunits (L4). In erythrocytes, both PFKM and PFKL subunits randomly tetramerize to form M4, L4 and other combinations (ML3, M2L2, M3L). In platelets, brain and fibroblasts, PFK contains a higher proportion of PFKP subunits. The kinetic and regulatory properties of the tetrameric enzyme are dependent on the subunit composition, hence can vary across tissues. Interacts with ATG4B; promoting phosphorylation of ATG4B. The cofactor is Mg(2+). Phosphorylation at Ser-386 promotes interaction with ATG4B. In terms of processing, glcNAcylation decreases enzyme activity.

The protein localises to the cytoplasm. The catalysed reaction is beta-D-fructose 6-phosphate + ATP = beta-D-fructose 1,6-bisphosphate + ADP + H(+). Its pathway is carbohydrate degradation; glycolysis; D-glyceraldehyde 3-phosphate and glycerone phosphate from D-glucose: step 3/4. Its activity is regulated as follows. Allosterically activated by ADP, AMP, or fructose 2,6-bisphosphate, and allosterically inhibited by ATP or citrate. Catalyzes the phosphorylation of D-fructose 6-phosphate to fructose 1,6-bisphosphate by ATP, the first committing step of glycolysis. In Homo sapiens (Human), this protein is ATP-dependent 6-phosphofructokinase, platelet type (PFKP).